Here is a 933-residue protein sequence, read N- to C-terminus: Probable Rho-type GTPase-activating protein 4 (933 aa).

2 consecutive LIM zinc-binding domains span residues 22–80 (CFCI…LCVD) and 81–129 (ICNG…CLPC). Disordered stretches follow at residues 181-200 (PSSVLSGRMQNTSSPTNSLR) and 304-338 (ENGTLPQLPKNESVVNPPPLRRSSTMNYKSVSTTT). A compositionally biased stretch (polar residues) spans 325 to 338 (RSSTMNYKSVSTTT). S353 carries the phosphoserine modification. 3 disordered regions span residues 415–435 (RLSSEPNGLKKRLTNSSNYEA), 605–628 (SSSFGIFNNDKKSNRTISTPSPRE), and 641–660 (GFRPKDNKDKESGGYNKRNS). Residues 619 to 628 (RTISTPSPRE) are compositionally biased toward polar residues. S625 is subject to Phosphoserine. Positions 643 to 652 (RPKDNKDKES) are enriched in basic and acidic residues. S738 and S740 each carry phosphoserine. One can recognise a Rho-GAP domain in the interval 753–932 (NRLTLLRVPT…FLIDHVHEVF (180 aa)).

In terms of biological role, GTPase-activating protein for Rho-type proteins. The polypeptide is Probable Rho-type GTPase-activating protein 4 (rga4) (Schizosaccharomyces pombe (strain 972 / ATCC 24843) (Fission yeast)).